Reading from the N-terminus, the 642-residue chain is Threonine--tRNA ligase (642 aa).

Positions 1 to 61 (MPVITLPDGS…ETDSTLSIIT (61 aa)) constitute a TGS domain. The segment at 243-534 (DHRKIGKQLD…LTEEFAGFFP (292 aa)) is catalytic. Residues C334, H385, and H511 each coordinate Zn(2+).

The protein belongs to the class-II aminoacyl-tRNA synthetase family. Homodimer. Requires Zn(2+) as cofactor.

It is found in the cytoplasm. The enzyme catalyses tRNA(Thr) + L-threonine + ATP = L-threonyl-tRNA(Thr) + AMP + diphosphate + H(+). Its function is as follows. Catalyzes the attachment of threonine to tRNA(Thr) in a two-step reaction: L-threonine is first activated by ATP to form Thr-AMP and then transferred to the acceptor end of tRNA(Thr). Also edits incorrectly charged L-seryl-tRNA(Thr). The polypeptide is Threonine--tRNA ligase (Klebsiella pneumoniae (strain 342)).